We begin with the raw amino-acid sequence, 516 residues long: Maturase K (516 aa).

The protein belongs to the intron maturase 2 family. MatK subfamily.

The protein localises to the plastid. It localises to the chloroplast. Functionally, usually encoded in the trnK tRNA gene intron. Probably assists in splicing its own and other chloroplast group II introns. The polypeptide is Maturase K (Chara globularis (Fragile stonewort)).